The following is a 94-amino-acid chain: Large ribosomal subunit protein bL25 (94 aa).

It belongs to the bacterial ribosomal protein bL25 family. Part of the 50S ribosomal subunit; part of the 5S rRNA/L5/L18/L25 subcomplex. Contacts the 5S rRNA. Binds to the 5S rRNA independently of L5 and L18.

In terms of biological role, this is one of the proteins that binds to the 5S RNA in the ribosome where it forms part of the central protuberance. The chain is Large ribosomal subunit protein bL25 from Yersinia pestis bv. Antiqua (strain Antiqua).